The following is a 129-amino-acid chain: Large ribosomal subunit protein bL12c (129 aa).

It belongs to the bacterial ribosomal protein bL12 family. In terms of assembly, homodimer. Part of the ribosomal stalk of the 50S ribosomal subunit. Forms a multimeric L10(L12)X complex, where L10 forms an elongated spine to which 2 to 4 L12 dimers bind in a sequential fashion. Binds GTP-bound translation factors.

Its subcellular location is the plastid. It localises to the chloroplast. Forms part of the ribosomal stalk which helps the ribosome interact with GTP-bound translation factors. Is thus essential for accurate translation. This is Large ribosomal subunit protein bL12c from Porphyra purpurea (Red seaweed).